We begin with the raw amino-acid sequence, 383 residues long: Presenilin-associated rhomboid-like protein A, mitochondrial (383 aa).

The N-terminal 37 residues, 1-37 (MAWRSCFMKWTQINSINASSLCPKSTRLNIHPQQRCG), are a transit peptide targeting the mitochondrion. The disordered stretch occupies residues 35-75 (RCGFRKTERPSESKKGVQETEAEAGGHNRAVPPKPVPPLPP). The Mitochondrial matrix segment spans residues 38–83 (FRKTERPSESKKGVQETEAEAGGHNRAVPPKPVPPLPPRRPHQLFR). Residues 39 to 52 (RKTERPSESKKGVQ) are compositionally biased toward basic and acidic residues. Residues 66-75 (PPKPVPPLPP) show a composition bias toward pro residues. A helical transmembrane segment spans residues 84 to 104 (PLVFTVGFTGCSFGAAAILQY). The Mitochondrial intermembrane segment spans residues 105–168 (ESVKSRVQLA…FWSGLSEGQK (64 aa)). The helical transmembrane segment at 169-189 (TVTGIIALNTVVLCCWRVPAM) threads the bilayer. At 190 to 219 (QRFLVKYFTSNPASKTRCLPMVLSSFSHYS) the chain is on the mitochondrial matrix side. The helical transmembrane segment at 220-240 (VIHMVVNMYVLWTFSSSIVSL) threads the bilayer. The Mitochondrial intermembrane portion of the chain corresponds to 241-245 (LGREQ). The helical transmembrane segment at 246-266 (FLALYLSGGVISTFVSYVFKT) threads the bilayer. Residues 267 to 271 (ATGRL) lie on the Mitochondrial matrix side of the membrane. The chain crosses the membrane as a helical span at residues 272–292 (GPSLGASGSIMTVLAAVCTKI). The active-site Nucleophile is serine 278. The Mitochondrial intermembrane segment spans residues 293-298 (PEAKLG). The chain crosses the membrane as a helical span at residues 299–319 (IVLLPVISFSAGNALKALVAL). The Mitochondrial matrix portion of the chain corresponds to 320 to 334 (DIAGLVLGWRFFDHA). The helical transmembrane segment at 335-355 (AHLGGALFGVWYIGYGHELIW) threads the bilayer. The active site involves histidine 336. Topologically, residues 356 to 383 (RKREPLIKFWHELRNMSPGRPGPGGGGG) are mitochondrial intermembrane.

The protein belongs to the peptidase S54 family.

It localises to the mitochondrion inner membrane. The enzyme catalyses Cleaves type-1 transmembrane domains using a catalytic dyad composed of serine and histidine that are contributed by different transmembrane domains.. Required for the control of apoptosis during postnatal growth. Essential for proteolytic processing of an antiapoptotic form of opa1 which prevents the release of mitochondrial cytochrome c in response to intrinsic apoptotic signals. The protein is Presenilin-associated rhomboid-like protein A, mitochondrial (parla) of Danio rerio (Zebrafish).